The following is a 32-amino-acid chain: Zinc metalloproteinase carinactivase-1 catalytic subunit (32 aa).

Positions 10–32 (FIKLVIVVDHSMVXKXNNDLIAI) constitute a Peptidase M12B domain.

This sequence belongs to the venom metalloproteinase (M12B) family. P-III subfamily. P-IIId sub-subfamily. In terms of assembly, heterodimer of a metalloproteinase subunit and a regulatory subunit comprising two disulfide-linked lectins (14 kDa and 17 kDa chains) (AC Q9PRP7 and AC Q9PRP8). Requires Zn(2+) as cofactor. As to expression, expressed by the venom gland.

The protein localises to the secreted. Its function is as follows. Calcium-dependent prothrombin (F2) activator. This protein may activate prothrombin via recognition by the regulatory subunit of the calcium ion bound conformation of its gamma-carboxyglutamic acid (GLA) domain, and the subsequent conversion of prothrombin to active thrombin is catalyzed by the catalytic subunit. This is Zinc metalloproteinase carinactivase-1 catalytic subunit from Echis carinatus (Saw-scaled viper).